The sequence spans 124 residues: Histone H2B, embryonic (124 aa).

The interval Met-1 to Lys-31 is disordered. Ser-111 is a glycosylation site (O-linked (GlcNAc) serine). Lys-119 participates in a covalent cross-link: Glycyl lysine isopeptide (Lys-Gly) (interchain with G-Cter in ubiquitin).

This sequence belongs to the histone H2B family. The nucleosome is a histone octamer containing two molecules each of H2A, H2B, H3 and H4 assembled in one H3-H4 heterotetramer and two H2A-H2B heterodimers. The octamer wraps approximately 147 bp of DNA. In terms of processing, monoubiquitination of Lys-119 gives a specific tag for epigenetic transcriptional activation and is also prerequisite for histone H3 'Lys-4' and 'Lys-79' methylation. GlcNAcylation at Ser-111 promotes monoubiquitination of Lys-119. It fluctuates in response to extracellular glucose, and associates with transcribed genes.

It localises to the nucleus. Its subcellular location is the chromosome. Its function is as follows. Core component of nucleosome. Nucleosomes wrap and compact DNA into chromatin, limiting DNA accessibility to the cellular machineries which require DNA as a template. Histones thereby play a central role in transcription regulation, DNA repair, DNA replication and chromosomal stability. DNA accessibility is regulated via a complex set of post-translational modifications of histones, also called histone code, and nucleosome remodeling. In Strongylocentrotus purpuratus (Purple sea urchin), this protein is Histone H2B, embryonic.